Here is a 418-residue protein sequence, read N- to C-terminus: 3-isopropylmalate dehydratase large subunit (418 aa).

[4Fe-4S] cluster is bound by residues cysteine 298, cysteine 358, and cysteine 361.

Belongs to the aconitase/IPM isomerase family. LeuC type 2 subfamily. Heterodimer of LeuC and LeuD. [4Fe-4S] cluster serves as cofactor.

The enzyme catalyses (2R,3S)-3-isopropylmalate = (2S)-2-isopropylmalate. Its pathway is amino-acid biosynthesis; L-leucine biosynthesis; L-leucine from 3-methyl-2-oxobutanoate: step 2/4. In terms of biological role, catalyzes the isomerization between 2-isopropylmalate and 3-isopropylmalate, via the formation of 2-isopropylmaleate. The chain is 3-isopropylmalate dehydratase large subunit from Caldanaerobacter subterraneus subsp. tengcongensis (strain DSM 15242 / JCM 11007 / NBRC 100824 / MB4) (Thermoanaerobacter tengcongensis).